The following is a 305-amino-acid chain: Serine/threonine-protein phosphatase ppe1 (305 aa).

The Mn(2+) site is built by D51, H53, D79, and N111. Residue H112 is the Proton donor of the active site. 2 residues coordinate Mn(2+): H161 and H235.

This sequence belongs to the PPP phosphatase family. PP-6 (PP-V) subfamily. Interacts with sts5, ekc1 and mis12. The cofactor is Mn(2+).

The protein localises to the nucleus. The enzyme catalyses O-phospho-L-seryl-[protein] + H2O = L-seryl-[protein] + phosphate. The catalysed reaction is O-phospho-L-threonyl-[protein] + H2O = L-threonyl-[protein] + phosphate. Has a role in chromosome segregation. May provide a dynamic connection between kinetochore microtubules and kinetochore chromatin. Negatively regulates mis12. The sequence is that of Serine/threonine-protein phosphatase ppe1 (ppe1) from Schizosaccharomyces pombe (strain 972 / ATCC 24843) (Fission yeast).